The sequence spans 436 residues: Serine protease hepsin (436 aa).

Residues methionine 1–alanine 29 form a disordered region. Topologically, residues methionine 1–alanine 38 are cytoplasmic. A helical; Signal-anchor for type II membrane protein membrane pass occupies residues alanine 39 to valine 59. Residues threonine 60–proline 436 lie on the Extracellular side of the membrane. The SRCR domain maps to valine 73–glutamine 170. Intrachain disulfides connect cysteine 96–cysteine 159, cysteine 109–cysteine 169, cysteine 138–cysteine 157, cysteine 172–cysteine 296, cysteine 207–cysteine 223, cysteine 310–cysteine 378, cysteine 341–cysteine 357, and cysteine 368–cysteine 400. Asparagine 131 is a glycosylation site (N-linked (GlcNAc...) asparagine). Residues isoleucine 182–lysine 424 form the Peptidase S1 domain. Catalysis depends on charge relay system residues histidine 222 and aspartate 276. Serine 372 functions as the Charge relay system in the catalytic mechanism.

Belongs to the peptidase S1 family. As to expression, detected in kidney, in thick ascending tubule epithelial cells (at protein level). Detected in kidney and liver.

It localises to the apical cell membrane. The protein resides in the cell membrane. The protein localises to the secreted. The catalysed reaction is Cleavage after basic amino-acid residues, with Arg strongly preferred to Lys.. Serine protease that cleaves extracellular substrates, and contributes to the proteolytic processing of growth factors, such as HGF and MST1/HGFL. Plays a role in cell growth and maintenance of cell morphology. Plays a role in the proteolytic processing of ACE2. Mediates the proteolytic cleavage of urinary UMOD that is required for UMOD polymerization. This chain is Serine protease hepsin (Hpn), found in Mus musculus (Mouse).